Consider the following 357-residue polypeptide: MSPSPFAPTIETIDYPFPPKPIPLSDAEKADYKARIKQLLIEKDAVLVAHYYTDPEIQALAEETGGCVSDSLEMARFGRDHPAKTLIVAGVKFMGETAKILSPEKTILMPTLEATCSLDLGCPIDKFNAFCDAHPDHTVVVYANTSAAVKARADWVVTSSIALEIVEHLDSEGKKIIWGPDRHLGSYIAKQTGAEMLMWQGDCIVHDEFKANALRDLKRVYPDAAILVHPESPASVVAMADAVGSTSQLIKAAQTMANERFIVATDRGIFYKMQQAAPGKTLIEAPTGGNGATCKSCAHCPWMAMNGLKAIEASLSDSDKTTHEIFVDEDLRVKALIPLTRMLDFAKTLNMKVKGNA.

Iminosuccinate-binding residues include His-50 and Ser-71. Cys-116 contacts [4Fe-4S] cluster. Iminosuccinate-binding positions include 142 to 144 and Ser-159; that span reads YAN. [4Fe-4S] cluster is bound at residue Cys-203. Residues 229-231 and Thr-246 contribute to the iminosuccinate site; that span reads HPE. Cys-300 serves as a coordination point for [4Fe-4S] cluster.

Belongs to the quinolinate synthase family. Type 1 subfamily. Requires [4Fe-4S] cluster as cofactor.

It is found in the cytoplasm. It catalyses the reaction iminosuccinate + dihydroxyacetone phosphate = quinolinate + phosphate + 2 H2O + H(+). Its pathway is cofactor biosynthesis; NAD(+) biosynthesis; quinolinate from iminoaspartate: step 1/1. Catalyzes the condensation of iminoaspartate with dihydroxyacetone phosphate to form quinolinate. This chain is Quinolinate synthase, found in Shewanella sp. (strain ANA-3).